A 102-amino-acid chain; its full sequence is Large ribosomal subunit protein bL21 (102 aa).

It belongs to the bacterial ribosomal protein bL21 family. Part of the 50S ribosomal subunit. Contacts protein L20.

Functionally, this protein binds to 23S rRNA in the presence of protein L20. This is Large ribosomal subunit protein bL21 from Ehrlichia ruminantium (strain Gardel).